A 246-amino-acid polypeptide reads, in one-letter code: 3-deoxy-manno-octulosonate cytidylyltransferase (246 aa).

This sequence belongs to the KdsB family.

It is found in the cytoplasm. The enzyme catalyses 3-deoxy-alpha-D-manno-oct-2-ulosonate + CTP = CMP-3-deoxy-beta-D-manno-octulosonate + diphosphate. The protein operates within nucleotide-sugar biosynthesis; CMP-3-deoxy-D-manno-octulosonate biosynthesis; CMP-3-deoxy-D-manno-octulosonate from 3-deoxy-D-manno-octulosonate and CTP: step 1/1. Its pathway is bacterial outer membrane biogenesis; lipopolysaccharide biosynthesis. Its function is as follows. Activates KDO (a required 8-carbon sugar) for incorporation into bacterial lipopolysaccharide in Gram-negative bacteria. The sequence is that of 3-deoxy-manno-octulosonate cytidylyltransferase from Bradyrhizobium diazoefficiens (strain JCM 10833 / BCRC 13528 / IAM 13628 / NBRC 14792 / USDA 110).